Here is a 278-residue protein sequence, read N- to C-terminus: Protein irg-2 (278 aa).

The tract at residues 152-179 (NSIRGQPFKSLQPENRTPTQVTGHQQES) is disordered. Residues 163 to 179 (QPENRTPTQVTGHQQES) are compositionally biased toward polar residues.

Its function is as follows. Plays a role in innate immunity by conferring resistance to virulent strains of the Gram-negative bacterium P.aeruginosa via the zip-2 pathway and independent of the pmk-1 p38MAPK pathway. Induced as part of several immune responses to translational inhibition arising from endocytosis of ToxA during P.aeruginosa infection or exposure to exogenous cycloheximide. The polypeptide is Protein irg-2 (Caenorhabditis elegans).